The chain runs to 53 residues: ATP synthase protein 8 (53 aa).

The chain crosses the membrane as a helical span at residues 9-29 (WITSMLMFWISVSILFSTLWW).

Belongs to the ATPase protein 8 family. As to quaternary structure, F-type ATPases have 2 components, CF(1) - the catalytic core - and CF(0) - the membrane proton channel.

The protein localises to the mitochondrion membrane. Functionally, mitochondrial membrane ATP synthase (F(1)F(0) ATP synthase or Complex V) produces ATP from ADP in the presence of a proton gradient across the membrane which is generated by electron transport complexes of the respiratory chain. F-type ATPases consist of two structural domains, F(1) - containing the extramembraneous catalytic core and F(0) - containing the membrane proton channel, linked together by a central stalk and a peripheral stalk. During catalysis, ATP synthesis in the catalytic domain of F(1) is coupled via a rotary mechanism of the central stalk subunits to proton translocation. Part of the complex F(0) domain. Minor subunit located with subunit a in the membrane. This chain is ATP synthase protein 8 (MT-ATP8), found in Lumbricus terrestris (Common earthworm).